The following is a 106-amino-acid chain: A-type ATP synthase subunit F (106 aa).

Belongs to the V-ATPase F subunit family. Has multiple subunits with at least A(3), B(3), C, D, E, F, H, I and proteolipid K(x).

The protein resides in the cell membrane. In terms of biological role, component of the A-type ATP synthase that produces ATP from ADP in the presence of a proton gradient across the membrane. This is A-type ATP synthase subunit F from Methanothermobacter thermautotrophicus (strain ATCC 29096 / DSM 1053 / JCM 10044 / NBRC 100330 / Delta H) (Methanobacterium thermoautotrophicum).